Here is a 256-residue protein sequence, read N- to C-terminus: Undecaprenyl-diphosphatase (256 aa).

8 helical membrane-spanning segments follow: residues 5 to 25 (IIEI…PISS), 41 to 61 (NSLM…VFYF), 74 to 94 (LLSL…VISS), 100 to 120 (LLEN…IILY), 135 to 155 (LNFK…IPGV), 180 to 200 (FLLA…NAIG), 208 to 228 (LVLI…KFFL), and 234 to 254 (FSLN…FIII).

It belongs to the UppP family.

The protein localises to the cell inner membrane. It catalyses the reaction di-trans,octa-cis-undecaprenyl diphosphate + H2O = di-trans,octa-cis-undecaprenyl phosphate + phosphate + H(+). Functionally, catalyzes the dephosphorylation of undecaprenyl diphosphate (UPP). Confers resistance to bacitracin. The sequence is that of Undecaprenyl-diphosphatase from Pelagibacter ubique (strain HTCC1062).